Consider the following 51-residue polypeptide: Defensin-like protein 1 (51 aa).

A Pyrrolidone carboxylic acid modification is found at glutamine 1. 4 cysteine pairs are disulfide-bonded: cysteine 4/cysteine 51, cysteine 15/cysteine 36, cysteine 21/cysteine 45, and cysteine 25/cysteine 47.

Forms oligomers in its native state.

In terms of biological role, possesses antifungal activity sensitive to inorganic cations. The chain is Defensin-like protein 1 from Sinapis alba (White mustard).